We begin with the raw amino-acid sequence, 500 residues long: Probable cytosol aminopeptidase (500 aa).

Positions 262 and 267 each coordinate Mn(2+). The active site involves lysine 274. Positions 285, 344, and 346 each coordinate Mn(2+). Arginine 348 is an active-site residue.

This sequence belongs to the peptidase M17 family. Mn(2+) is required as a cofactor.

The protein localises to the cytoplasm. The catalysed reaction is Release of an N-terminal amino acid, Xaa-|-Yaa-, in which Xaa is preferably Leu, but may be other amino acids including Pro although not Arg or Lys, and Yaa may be Pro. Amino acid amides and methyl esters are also readily hydrolyzed, but rates on arylamides are exceedingly low.. It carries out the reaction Release of an N-terminal amino acid, preferentially leucine, but not glutamic or aspartic acids.. Its function is as follows. Presumably involved in the processing and regular turnover of intracellular proteins. Catalyzes the removal of unsubstituted N-terminal amino acids from various peptides. This chain is Probable cytosol aminopeptidase, found in Ehrlichia ruminantium (strain Gardel).